Reading from the N-terminus, the 66-residue chain is Beta-toxin Cbo1 (66 aa).

The region spanning 1–66 is the LCN-type CS-alpha/beta domain; that stretch reads KEGYLVNHST…VWPLPKKTCN (66 aa). 4 disulfide bridges follow: Cys12/Cys65, Cys16/Cys41, Cys25/Cys46, and Cys29/Cys48. The residue at position 66 (Asn66) is an Asparagine amide.

It belongs to the long (4 C-C) scorpion toxin superfamily. Sodium channel inhibitor family. Beta subfamily. As to expression, expressed by the venom gland.

It localises to the secreted. In terms of biological role, beta toxins bind voltage-independently at site-4 of sodium channels and shift the voltage of activation toward more negative potentials thereby affecting sodium channel activation and promoting spontaneous and repetitive firing. Is active on the human voltage-gated sodium channel Nav1.6/SCN8A when tested at 200 nM. In vivo, is toxic to mice when intraperitoneally injected. In Centruroides bonito (Scorpion), this protein is Beta-toxin Cbo1.